The primary structure comprises 507 residues: ATP synthase subunit alpha, chloroplastic (507 aa).

Position 170–177 (170–177 (GDRQTGKT)) interacts with ATP.

The protein belongs to the ATPase alpha/beta chains family. In terms of assembly, F-type ATPases have 2 components, CF(1) - the catalytic core - and CF(0) - the membrane proton channel. CF(1) has five subunits: alpha(3), beta(3), gamma(1), delta(1), epsilon(1). CF(0) has four main subunits: a, b, b' and c.

It localises to the plastid. The protein resides in the chloroplast thylakoid membrane. It carries out the reaction ATP + H2O + 4 H(+)(in) = ADP + phosphate + 5 H(+)(out). Produces ATP from ADP in the presence of a proton gradient across the membrane. The alpha chain is a regulatory subunit. The chain is ATP synthase subunit alpha, chloroplastic from Morus indica (Mulberry).